A 587-amino-acid chain; its full sequence is RuBisCO large subunit-binding protein subunit alpha, chloroplastic (587 aa).

Polar residues predominate over residues 1 to 25 (MASTNALSSTSILRSPTNQAQTSLS). The segment at 1–33 (MASTNALSSTSILRSPTNQAQTSLSKKVKQHGR) is disordered. Residues 1-47 (MASTNALSSTSILRSPTNQAQTSLSKKVKQHGRVNFRQKPNRFVVKA) constitute a chloroplast transit peptide.

It belongs to the chaperonin (HSP60) family. Oligomer of probably six alpha and six beta subunits.

The protein localises to the plastid. Its subcellular location is the chloroplast. This protein binds RuBisCO small and large subunits and is implicated in the assembly of the enzyme oligomer. This is RuBisCO large subunit-binding protein subunit alpha, chloroplastic from Pisum sativum (Garden pea).